A 546-amino-acid polypeptide reads, in one-letter code: Chaperonin GroEL (546 aa).

Residues 29 to 32 (TMGP), Lys-50, 86 to 90 (DGTTT), Gly-414, and Asp-492 contribute to the ATP site.

It belongs to the chaperonin (HSP60) family. As to quaternary structure, forms a cylinder of 14 subunits composed of two heptameric rings stacked back-to-back. Interacts with the co-chaperonin GroES.

The protein resides in the cytoplasm. The catalysed reaction is ATP + H2O + a folded polypeptide = ADP + phosphate + an unfolded polypeptide.. Its function is as follows. Together with its co-chaperonin GroES, plays an essential role in assisting protein folding. The GroEL-GroES system forms a nano-cage that allows encapsulation of the non-native substrate proteins and provides a physical environment optimized to promote and accelerate protein folding. This chain is Chaperonin GroEL, found in Helicobacter pylori (strain J99 / ATCC 700824) (Campylobacter pylori J99).